Reading from the N-terminus, the 419-residue chain is Serine/threonine-protein kinase Kist (419 aa).

In terms of domain architecture, Protein kinase spans W23–F303. Residues L29 to V37 and K54 contribute to the ATP site. D158 functions as the Proton acceptor in the catalytic mechanism. Residues L323–P405 form the RRM domain.

The protein belongs to the protein kinase superfamily. Ser/Thr protein kinase family. As to quaternary structure, interacts with PAM and CDKN1B/p27Kip1. Interacts with stathmin.

The protein resides in the nucleus. The enzyme catalyses L-seryl-[protein] + ATP = O-phospho-L-seryl-[protein] + ADP + H(+). It carries out the reaction L-threonyl-[protein] + ATP = O-phospho-L-threonyl-[protein] + ADP + H(+). Its function is as follows. Upon serum stimulation, phosphorylates CDKN1B/p27Kip1, thus controlling CDKN1B subcellular location and cell cycle progression in G1 phase. May be involved in trafficking and/or processing of RNA. The polypeptide is Serine/threonine-protein kinase Kist (Uhmk1) (Mus musculus (Mouse)).